A 501-amino-acid polypeptide reads, in one-letter code: Lysine--tRNA ligase (501 aa).

Residues E411 and E418 each contribute to the Mg(2+) site.

This sequence belongs to the class-II aminoacyl-tRNA synthetase family. As to quaternary structure, homodimer. Mg(2+) is required as a cofactor.

Its subcellular location is the cytoplasm. It catalyses the reaction tRNA(Lys) + L-lysine + ATP = L-lysyl-tRNA(Lys) + AMP + diphosphate. The chain is Lysine--tRNA ligase from Shewanella woodyi (strain ATCC 51908 / MS32).